The chain runs to 184 residues: ATP synthase subunit delta (184 aa).

Belongs to the ATPase delta chain family. F-type ATPases have 2 components, F(1) - the catalytic core - and F(0) - the membrane proton channel. F(1) has five subunits: alpha(3), beta(3), gamma(1), delta(1), epsilon(1). F(0) has three main subunits: a(1), b(2) and c(10-14). The alpha and beta chains form an alternating ring which encloses part of the gamma chain. F(1) is attached to F(0) by a central stalk formed by the gamma and epsilon chains, while a peripheral stalk is formed by the delta and b chains.

It is found in the cell inner membrane. In terms of biological role, f(1)F(0) ATP synthase produces ATP from ADP in the presence of a proton or sodium gradient. F-type ATPases consist of two structural domains, F(1) containing the extramembraneous catalytic core and F(0) containing the membrane proton channel, linked together by a central stalk and a peripheral stalk. During catalysis, ATP synthesis in the catalytic domain of F(1) is coupled via a rotary mechanism of the central stalk subunits to proton translocation. This protein is part of the stalk that links CF(0) to CF(1). It either transmits conformational changes from CF(0) to CF(1) or is implicated in proton conduction. The sequence is that of ATP synthase subunit delta from Rickettsia peacockii (strain Rustic).